The sequence spans 249 residues: Probable transcriptional regulatory protein ZMO0153 (249 aa).

It belongs to the TACO1 family.

It is found in the cytoplasm. The chain is Probable transcriptional regulatory protein ZMO0153 from Zymomonas mobilis subsp. mobilis (strain ATCC 31821 / ZM4 / CP4).